Consider the following 290-residue polypeptide: Nucleotide-binding protein FN1089 (290 aa).

11-18 (GLSGAGKT) lines the ATP pocket. 56 to 59 (DIRT) is a GTP binding site.

It belongs to the RapZ-like family.

Functionally, displays ATPase and GTPase activities. The polypeptide is Nucleotide-binding protein FN1089 (Fusobacterium nucleatum subsp. nucleatum (strain ATCC 25586 / DSM 15643 / BCRC 10681 / CIP 101130 / JCM 8532 / KCTC 2640 / LMG 13131 / VPI 4355)).